We begin with the raw amino-acid sequence, 509 residues long: Putative ATP-dependent RNA helicase QP509L (509 aa).

Residues 110–262 (KKLLPPYGRF…KIIIHHLGQP (153 aa)) form the Helicase ATP-binding domain. 123–130 (LNTGLGKT) provides a ligand contact to ATP. A DEAH box motif is present at residues 215-218 (DEAH).

This sequence belongs to the DEAD box helicase family. DEAH subfamily.

It carries out the reaction ATP + H2O = ADP + phosphate + H(+). The chain is Putative ATP-dependent RNA helicase QP509L from African swine fever virus (isolate Tick/Malawi/Lil 20-1/1983) (ASFV).